Here is an 856-residue protein sequence, read N- to C-terminus: Lon protease (856 aa).

In terms of domain architecture, Lon N-terminal spans 68–261 (FPVLPLRDIV…KVLGLMESEI (194 aa)). Residue 412–419 (GPPGVGKT) participates in ATP binding. Positions 647–828 (EDQVGVVTGL…DEVLHHALLR (182 aa)) constitute a Lon proteolytic domain. Active-site residues include Ser-734 and Lys-777.

The protein belongs to the peptidase S16 family. Homohexamer. Organized in a ring with a central cavity.

The protein resides in the cytoplasm. It catalyses the reaction Hydrolysis of proteins in presence of ATP.. ATP-dependent serine protease that mediates the selective degradation of mutant and abnormal proteins as well as certain short-lived regulatory proteins. Required for cellular homeostasis and for survival from DNA damage and developmental changes induced by stress. Degrades polypeptides processively to yield small peptide fragments that are 5 to 10 amino acids long. Binds to DNA in a double-stranded, site-specific manner. The polypeptide is Lon protease (Azorhizobium caulinodans (strain ATCC 43989 / DSM 5975 / JCM 20966 / LMG 6465 / NBRC 14845 / NCIMB 13405 / ORS 571)).